The following is a 401-amino-acid chain: Adenylosuccinate synthetase (401 aa).

GTP-binding positions include 12-18 (GDEGKGK) and 40-42 (GHT). Catalysis depends on aspartate 13, which acts as the Proton acceptor. Mg(2+) contacts are provided by aspartate 13 and glycine 40. Residues 13–16 (DEGK), 38–41 (NAGH), threonine 128, arginine 142, glutamine 212, threonine 227, and arginine 290 contribute to the IMP site. The Proton donor role is filled by histidine 41. 286 to 292 (ATTRRPR) contacts substrate. GTP-binding positions include arginine 292, 318–320 (KAD), and 390–392 (STG).

Belongs to the adenylosuccinate synthetase family. As to quaternary structure, homodimer. It depends on Mg(2+) as a cofactor.

The protein localises to the cytoplasm. It catalyses the reaction IMP + L-aspartate + GTP = N(6)-(1,2-dicarboxyethyl)-AMP + GDP + phosphate + 2 H(+). Its pathway is purine metabolism; AMP biosynthesis via de novo pathway; AMP from IMP: step 1/2. Plays an important role in the de novo pathway of purine nucleotide biosynthesis. Catalyzes the first committed step in the biosynthesis of AMP from IMP. The chain is Adenylosuccinate synthetase from Pseudothermotoga lettingae (strain ATCC BAA-301 / DSM 14385 / NBRC 107922 / TMO) (Thermotoga lettingae).